Here is a 549-residue protein sequence, read N- to C-terminus: Arginine-containing cyclodipeptide synthase amaA (549 aa).

The Conserved DDXXE motif motif lies at 445-449 (DDRAE).

Belongs to the arginine-containing cyclodipeptide synthase family.

It carries out the reaction L-prolyl-tRNA(Pro) + L-arginyl-tRNA(Arg) = cyclo(L-arginyl-L-prolyl) + tRNA(Pro) + tRNA(Arg) + 2 H(+). It functions in the pathway secondary metabolite biosynthesis. Functionally, arginine-containing cyclodipeptide synthase; part of the cluster that mediates the biosynthesis of a highly modified cyclo-arginine-proline dipeptide (cRP). Within the pathway, amaA acts as the scaffold-generating enzyme and is responsible for formation of the cyclo-Arg-Pro diketopiperazine (cRW) from L-arginyl-tRNA(Arg) + L-prolyl-tRNA(Pro). Additional enzymes from the cluster then further modify the cyclo-Arg-Pro diketopiperazine (cRW) scaffold. The polypeptide is Arginine-containing cyclodipeptide synthase amaA (Apiospora montagnei (Sphaeria apiospora)).